Here is a 702-residue protein sequence, read N- to C-terminus: Polyribonucleotide nucleotidyltransferase (702 aa).

Mg(2+)-binding residues include aspartate 485 and aspartate 491. Residues proline 552–isoleucine 612 enclose the KH domain. Positions glycine 622 to lysine 690 constitute an S1 motif domain.

Belongs to the polyribonucleotide nucleotidyltransferase family. Mg(2+) serves as cofactor.

It localises to the cytoplasm. The enzyme catalyses RNA(n+1) + phosphate = RNA(n) + a ribonucleoside 5'-diphosphate. Functionally, involved in mRNA degradation. Catalyzes the phosphorolysis of single-stranded polyribonucleotides processively in the 3'- to 5'-direction. This is Polyribonucleotide nucleotidyltransferase from Clostridium botulinum (strain ATCC 19397 / Type A).